The chain runs to 175 residues: RNA pyrophosphohydrolase (175 aa).

Residues 7–150 enclose the Nudix hydrolase domain; the sequence is GYRLNVGIIL…KRQVYIQALK (144 aa). Residues 39 to 60 carry the Nudix box motif; sequence GGLAPGETAMQAMYRELHEEVG.

The protein belongs to the Nudix hydrolase family. RppH subfamily. A divalent metal cation serves as cofactor.

Its function is as follows. Accelerates the degradation of transcripts by removing pyrophosphate from the 5'-end of triphosphorylated RNA, leading to a more labile monophosphorylated state that can stimulate subsequent ribonuclease cleavage. The chain is RNA pyrophosphohydrolase from Legionella pneumophila (strain Paris).